Consider the following 81-residue polypeptide: MIKRIVVTEKALRLAEKENKITLIVDRGATKKQIAEEVERLYNVKVEKVNTLITPRGEKKAYVKLTKEHNAMDLLSKLGVL.

The protein belongs to the universal ribosomal protein uL23 family. In terms of assembly, part of the 50S ribosomal subunit. Contacts protein L29.

Its function is as follows. Binds to 23S rRNA. One of the proteins that surrounds the polypeptide exit tunnel on the outside of the ribosome. The polypeptide is Large ribosomal subunit protein uL23 (Pyrobaculum aerophilum (strain ATCC 51768 / DSM 7523 / JCM 9630 / CIP 104966 / NBRC 100827 / IM2)).